We begin with the raw amino-acid sequence, 836 residues long: MWLLALCLVGLAGAQRGGGGPGGGAPGGPGLGLGSLGEERFPVVNTAYGRVRGVRRELNNEILGPVVQFLGVPYATPPLGARRFQPPEAPASWPGVRNATTLPPACPQNLHGALPAIMLPVWFTDNLEAAATYVQNQSEDCLYLNLYVPTEDGPLTKKRDEATLNPPDTDIRDSGKKPVMLFLHGGSYMEGTGNMFDGSVLAAYGNVIVVTLNYRLGVLGFLSTGDQAAKGNYGLLDQIQALRWLSENIAHFGGDPERITIFGSGAGASCVNLLILSHHSEGLFQKAIAQSGTAISSWSVNYQPLKYTRLLAAKVGCDREDSTEAVECLRRKSSRELVDQDVQPARYHIAFGPVVDGDVVPDDPEILMQQGEFLNYDMLIGVNQGEGLKFVEDSAESEDGVSASAFDFTVSNFVDNLYGYPEGKDVLRETIKFMYTDWADRDNGEMRRKTLLALFTDHQWVAPAVATAKLHADYQSPVYFYTFYHHCQAEGRPEWADAAHGDELPYVFGVPMVGATDLFPCNFSKNDVMLSAVVMTYWTNFAKTGDPNQPVPQDTKFIHTKPNRFEEVVWSKFNSKEKQYLHIGLKPRVRDNYRANKVAFWLELVPHLHNLHTELFTTTTRLPPYATRWPPRTPGPGTSGTRRPPPPATLPPESDIDLGPRAYDRFPGDSRDYSTELSVTVAVGASLLFLNILAFAALYYKRDRRQELRCRRLSPPGGSGSGVPGGGPLLPTAGRELPPEEELVSLQLKRGGGVGADPAEALRPACPPDYTLALRRAPDDVPLLAPGALTLLPSGLGPPPPPPPPSLHPFGPFPPPPPTATSHNNTLPHPHSTTRV.

The N-terminal stretch at 1–14 (MWLLALCLVGLAGA) is a signal peptide. Over 15–678 (QRGGGGPGGG…DSRDYSTELS (664 aa)) the chain is Extracellular. N98 and N136 each carry an N-linked (GlcNAc...) asparagine glycan. Cystine bridges form between C106-C141, C317-C328, and C487-C521. A glycan (N-linked (GlcNAc...) asparagine) is linked at N522. The segment at 623 to 661 (PPYATRWPPRTPGPGTSGTRRPPPPATLPPESDIDLGPR) is disordered. A helical transmembrane segment spans residues 679 to 699 (VTVAVGASLLFLNILAFAALY). The required for interaction with LHFPL4 stretch occupies residues 679 to 699 (VTVAVGASLLFLNILAFAALY). The Cytoplasmic segment spans residues 700-836 (YKRDRRQELR…LPHPHSTTRV (137 aa)). Disordered regions lie at residues 711–735 (RRLS…TAGR) and 791–836 (LLPS…TTRV). Residues S714 and S719 each carry the phosphoserine modification. Over residues 717 to 728 (GGSGSGVPGGGP) the composition is skewed to gly residues. A compositionally biased stretch (pro residues) spans 796-819 (LGPPPPPPPPSLHPFGPFPPPPPT). Residues 824–836 (NNTLPHPHSTTRV) are compositionally biased toward polar residues.

Belongs to the type-B carboxylesterase/lipase family. In terms of assembly, interacts with neurexins NRXN1, NRXN2 and NRXN3. Interaction with neurexins is mediated by heparan sulfate glycan modification on neurexin. Interacts (via its C-terminus) with DLG4/PSD-95 (via PDZ domain 3). Interacts with PATJ. Interacts with MDGA2. Interacts with GPHN. Interacts with MDGA1. Found in a complex with MAGI2 and IGSF9B, where it interacts with MAGI2 (via WW 1, WW 2 and PDZ 2 domains). Identified in a complex of 720 kDa composed of LHFPL4, NLGN2, GABRA1, GABRB2, GABRG2 and GABRB3. Interacts with LHFPL4; leading to mutual regulation of the protein level and synaptic clustering. Interacts with GABRA1. As to expression, brain and arteries. Detected in the retina outer plexiform layer (at protein level). Widely expressed. Detected in heart, brain, spleen, lung, liver, skeletal muscle, kidney and testis.

Its subcellular location is the cell membrane. The protein localises to the postsynaptic cell membrane. It is found in the presynaptic cell membrane. Transmembrane scaffolding protein involved in cell-cell interactions via its interactions with neurexin family members. Mediates cell-cell interactions both in neurons and in other types of cells, such as Langerhans beta cells. Mediates cell-cell interactions between Langerhans beta cells and modulates insulin secretion. Plays a role in synapse function and synaptic signal transmission, especially via gamma-aminobutyric acid receptors (GABA(A) receptors). Functions by recruiting and clustering synaptic proteins. Promotes clustering of postsynaptic GABRG2 and GPHN. Promotes clustering of postsynaptic LHFPL4. Modulates signaling by inhibitory synapses, and thereby plays a role in controlling the ratio of signaling by excitatory and inhibitory synapses and information processing. Required for normal signal amplitude from inhibitory synapses, but is not essential for normal signal frequency. May promote the initial formation of synapses, but is not essential for this. In vitro, triggers the de novo formation of presynaptic structures. The sequence is that of Neuroligin-2 (Nlgn2) from Mus musculus (Mouse).